The primary structure comprises 119 residues: NAD(P)H-quinone oxidoreductase subunit M (119 aa).

It belongs to the complex I NdhM subunit family. In terms of assembly, NDH-1 can be composed of about 15 different subunits; different subcomplexes with different compositions have been identified which probably have different functions.

It is found in the cell inner membrane. It carries out the reaction a plastoquinone + NADH + (n+1) H(+)(in) = a plastoquinol + NAD(+) + n H(+)(out). The enzyme catalyses a plastoquinone + NADPH + (n+1) H(+)(in) = a plastoquinol + NADP(+) + n H(+)(out). NDH-1 shuttles electrons from an unknown electron donor, via FMN and iron-sulfur (Fe-S) centers, to quinones in the respiratory and/or the photosynthetic chain. The immediate electron acceptor for the enzyme in this species is believed to be plastoquinone. Couples the redox reaction to proton translocation, and thus conserves the redox energy in a proton gradient. Cyanobacterial NDH-1 also plays a role in inorganic carbon-concentration. The sequence is that of NAD(P)H-quinone oxidoreductase subunit M from Gloeobacter violaceus (strain ATCC 29082 / PCC 7421).